Consider the following 283-residue polypeptide: Polyprenyl-phosphate transporter (283 aa).

9 helical membrane-spanning segments follow: residues 27–47 (GTIA…SGIF), 51–71 (FWPS…AMGS), 85–105 (IPTM…LLKI), 112–132 (FTTK…VITL), 148–168 (TSLI…MLLP), 169–189 (GISG…MLAI), 197–217 (FAGL…FIIS), 230–250 (LMTF…VFPG), and 255–275 (IVMW…SLTL).

It belongs to the PopT family.

It is found in the cell membrane. Its activity is regulated as follows. Active in alkaline conditions. In terms of biological role, flippase that catalyzes the transport of undecaprenyl phosphate (UndP) across the cytoplasmic membrane, from the external side to the cytoplasmic side. Is involved in UndP recycling during peptidoglycan synthesis. Necessary for peptidoglycan maintenance. This Staphylococcus aureus (strain NCTC 8325 / PS 47) protein is Polyprenyl-phosphate transporter.